Reading from the N-terminus, the 432-residue chain is D-amino acid dehydrogenase (432 aa).

3–17 (VVILGSGVVGVASAW) contacts FAD.

Belongs to the DadA oxidoreductase family. It depends on FAD as a cofactor.

The enzyme catalyses a D-alpha-amino acid + A + H2O = a 2-oxocarboxylate + AH2 + NH4(+). Its pathway is amino-acid degradation; D-alanine degradation; NH(3) and pyruvate from D-alanine: step 1/1. In terms of biological role, oxidative deamination of D-amino acids. The polypeptide is D-amino acid dehydrogenase (Escherichia coli O127:H6 (strain E2348/69 / EPEC)).